The primary structure comprises 336 residues: UDP-glucose 4-epimerase (336 aa).

Residues 11 to 12 (YI), 31 to 36 (DNLINS), 58 to 59 (DI), 80 to 84 (FAGLK), Asn99, Ser124, Tyr149, Lys153, and Phe178 contribute to the NAD(+) site. The substrate site is built by Ser124 and Tyr149. Tyr149 functions as the Proton acceptor in the catalytic mechanism. Residues Asn179, 199–200 (NL), 216–218 (LVY), Arg231, and 290–293 (RPGD) contribute to the substrate site.

It belongs to the NAD(P)-dependent epimerase/dehydratase family. In terms of assembly, homodimer. The cofactor is NAD(+).

It carries out the reaction UDP-alpha-D-glucose = UDP-alpha-D-galactose. It functions in the pathway carbohydrate metabolism; galactose metabolism. Its function is as follows. Involved in the metabolism of galactose. Catalyzes the conversion of UDP-galactose (UDP-Gal) to UDP-glucose (UDP-Glc) through a mechanism involving the transient reduction of NAD. This chain is UDP-glucose 4-epimerase (galE), found in Yersinia enterocolitica.